Here is a 379-residue protein sequence, read N- to C-terminus: Anthranilate O-methyltransferase 3 (379 aa).

Basic and acidic residues predominate over residues 1 to 10 (MPMRIERDLH). Residues 1–21 (MPMRIERDLHMATGNGETSYT) form a disordered region. Tyr20 is a binding site for S-adenosyl-L-homocysteine. Gln27 serves as a coordination point for anthranilate. Positions 61, 66, 100, 101, 143, and 144 each coordinate S-adenosyl-L-homocysteine. Residues His164 and Trp165 each coordinate anthranilate. Glu265 and Phe267 together coordinate Mg(2+).

This sequence belongs to the methyltransferase superfamily. Type-7 methyltransferase family. SABATH subfamily.

The catalysed reaction is anthranilate + S-adenosyl-L-methionine = O-methyl anthranilate + S-adenosyl-L-homocysteine. It catalyses the reaction benzoate + S-adenosyl-L-methionine = methyl benzoate + S-adenosyl-L-homocysteine. The enzyme catalyses salicylate + S-adenosyl-L-methionine = methyl salicylate + S-adenosyl-L-homocysteine. In terms of biological role, methyltransferase involved in the biosynthesis of methyl anthranilate in response to stresses. Utilizes anthranilic acid as substrate. Produces exclusively the O-methyl ester. Can also use benzoic acid as substrate. Low activity with salicylic acid. This chain is Anthranilate O-methyltransferase 3 (AAMT3), found in Zea mays (Maize).